Reading from the N-terminus, the 319-residue chain is Nucleotide-binding protein Rru_A3448 (319 aa).

The segment at 1 to 34 (MGRSASLLRLRDPAPLPTDIAPDPAEAPPSPAAD) is disordered. Residue 42–49 (GMSGAGRT) coordinates ATP. Residue 90–93 (DTRT) coordinates GTP.

The protein belongs to the RapZ-like family.

Its function is as follows. Displays ATPase and GTPase activities. This Rhodospirillum rubrum (strain ATCC 11170 / ATH 1.1.1 / DSM 467 / LMG 4362 / NCIMB 8255 / S1) protein is Nucleotide-binding protein Rru_A3448.